The following is a 129-amino-acid chain: Small ribosomal subunit protein uS11 (129 aa).

Belongs to the universal ribosomal protein uS11 family. Part of the 30S ribosomal subunit. Interacts with proteins S7 and S18. Binds to IF-3.

Located on the platform of the 30S subunit, it bridges several disparate RNA helices of the 16S rRNA. Forms part of the Shine-Dalgarno cleft in the 70S ribosome. This Glaesserella parasuis serovar 5 (strain SH0165) (Haemophilus parasuis) protein is Small ribosomal subunit protein uS11.